Reading from the N-terminus, the 236-residue chain is Mitochondrial inner membrane protease ATP23 (236 aa).

His136 is an a divalent metal cation binding site. Glu137 is an active-site residue. His140 serves as a coordination point for a divalent metal cation.

The protein belongs to the peptidase M76 family.

The protein localises to the mitochondrion inner membrane. Has a dual role in the assembly of mitochondrial ATPase. Acts as a protease that removes N-terminal residues of mitochondrial ATPase CF(0) subunit 6 at the intermembrane space side. Also involved in the correct assembly of the membrane-embedded ATPase CF(0) particle, probably mediating association of subunit 6 with the subunit 9 ring. The protein is Mitochondrial inner membrane protease ATP23 (ATP23) of Debaryomyces hansenii (strain ATCC 36239 / CBS 767 / BCRC 21394 / JCM 1990 / NBRC 0083 / IGC 2968) (Yeast).